The following is a 332-amino-acid chain: Heptahelical transmembrane protein 1 (332 aa).

Residues 1–52 are disordered; sequence MDQNGHNDEAETVSCGNGNCKSKIVPGDDHGGDESSGTKRRKKRKTQQKTMK. The Cytoplasmic segment spans residues 1–98; sequence MDQNGHNDEA…VFSFHNESLN (98 aa). Basic and acidic residues predominate over residues 26–37; that stretch reads PGDDHGGDESSG. Residues 38-52 show a composition bias toward basic residues; that stretch reads TKRRKKRKTQQKTMK. Residues 99 to 119 form a helical membrane-spanning segment; sequence VWTHLIGFIFFVALTVANIIH. Residues 120-138 lie on the Extracellular side of the membrane; sequence HDGFFPVDAKSPGNVTRWP. The chain crosses the membrane as a helical span at residues 139–159; the sequence is FFVFLGGSMFCLLASSICHLF. Topologically, residues 160-172 are cytoplasmic; the sequence is CCHSKELNVFLLR. A helical membrane pass occupies residues 173–193; sequence IDYAGITAMIITSFFPPIFYI. Topologically, residues 194 to 199 are extracellular; that stretch reads FQCTPR. The chain crosses the membrane as a helical span at residues 200 to 220; that stretch reads WYFIYLAGITSMGIFTIITLF. The Cytoplasmic segment spans residues 221 to 233; sequence TPSLSAPKYRAFR. A helical membrane pass occupies residues 234–254; that stretch reads ALLFASMGLFGIVPAAHALVV. At 255-262 the chain is on the extracellular side; it reads NWGNPQRN. The helical transmembrane segment at 263–283 threads the bilayer; that stretch reads VTLVYELLMAVFYLVGTGFYV. Residues 284–303 are Cytoplasmic-facing; sequence GRVPERLKPGWFDRVGHSHQ. The chain crosses the membrane as a helical span at residues 304–324; sequence IFHVFVLLGALSHYAAALLFL. The Extracellular segment spans residues 325–332; the sequence is DWRDHVGC.

This sequence belongs to the ADIPOR family. In terms of assembly, interacts (via N-terminus) with SCRM/ICE1. Expressed in roots, hypocotyls, vasculature of cotyledons and leaves, hydathodes and guard cells. In reproductive organs, expressed in trichomes, veins of sepals, stamens and stigmata of pistils.

It is found in the membrane. Its function is as follows. May act as a negative regulator of abscisic acid (ABA)-mediated osmotic stress signaling and function in cross-talk between cold and osmotic signaling. The protein is Heptahelical transmembrane protein 1 (HHP1) of Arabidopsis thaliana (Mouse-ear cress).